A 309-amino-acid chain; its full sequence is 4-diphosphocytidyl-2-C-methyl-D-erythritol kinase (309 aa).

The active site involves Lys-28. 120–130 (PSQAGMGGGSS) contributes to the ATP binding site. Asp-162 is a catalytic residue.

Belongs to the GHMP kinase family. IspE subfamily.

The enzyme catalyses 4-CDP-2-C-methyl-D-erythritol + ATP = 4-CDP-2-C-methyl-D-erythritol 2-phosphate + ADP + H(+). It participates in isoprenoid biosynthesis; isopentenyl diphosphate biosynthesis via DXP pathway; isopentenyl diphosphate from 1-deoxy-D-xylulose 5-phosphate: step 3/6. Functionally, catalyzes the phosphorylation of the position 2 hydroxy group of 4-diphosphocytidyl-2C-methyl-D-erythritol. The protein is 4-diphosphocytidyl-2-C-methyl-D-erythritol kinase of Polaromonas sp. (strain JS666 / ATCC BAA-500).